A 94-amino-acid polypeptide reads, in one-letter code: Co-chaperonin GroES (94 aa).

This sequence belongs to the GroES chaperonin family. Heptamer of 7 subunits arranged in a ring. Interacts with the chaperonin GroEL.

The protein localises to the cytoplasm. Its function is as follows. Together with the chaperonin GroEL, plays an essential role in assisting protein folding. The GroEL-GroES system forms a nano-cage that allows encapsulation of the non-native substrate proteins and provides a physical environment optimized to promote and accelerate protein folding. GroES binds to the apical surface of the GroEL ring, thereby capping the opening of the GroEL channel. The chain is Co-chaperonin GroES from Streptococcus agalactiae serotype III (strain NEM316).